Consider the following 189-residue polypeptide: MDTEYEQVNKPWSELYKETTLGNKLMVNVGMEDQEVPLLGSNFLTKVRVGLSGGYITMRRIRIKIIPLVSRKAGVSGKLYLRDISDTTGRKLHCTESLDLGREIRLTMQHLDFSVSTRSDVPIVFGFEELVSPFLEGRELFSIYVRWQFGLSKNCYSLPQSKWKVMYQEDALKVLKPSKKKASRTDSSV.

It belongs to the tombusvirus/aureusvirus movement protein p22 family.

The protein resides in the host membrane. Its function is as follows. Transports viral genome to neighboring plant cells directly through plasmosdesmata, without any budding. The movement protein allows efficient cell to cell propagation, by bypassing the host cell wall barrier. This Artichoke mottled crinkle virus (AMCV) protein is Movement protein.